A 460-amino-acid chain; its full sequence is Elongation factor 1-alpha-B (460 aa).

Gly-2 is subject to N,N,N-trimethylglycine. The residue at position 3 (Lys-3) is an N6,N6-dimethyllysine; alternate. An N6-methyllysine; alternate modification is found at Lys-3. A tr-type G domain is found at 5–240 (KGHINVVVIG…DSIEPPARPT (236 aa)). Positions 14–21 (GHVDSGKS) are G1. 14–21 (GHVDSGKS) serves as a coordination point for GTP. Residue Lys-30 is modified to N6-methyllysine. Positions 70 to 74 (GITID) are G2. At Lys-79 the chain carries N6,N6,N6-trimethyllysine. A G3 region spans residues 91-94 (DAPG). Residues 91–95 (DAPGH) and 153–156 (NKMD) each bind GTP. The interval 153–156 (NKMD) is G4. Positions 192–194 (SGF) are G5. Lys-316 bears the N6,N6-dimethyllysine; alternate mark. Lys-316 bears the N6-methyllysine; alternate mark. Lys-390 is modified (N6-methyllysine).

This sequence belongs to the TRAFAC class translation factor GTPase superfamily. Classic translation factor GTPase family. EF-Tu/EF-1A subfamily.

The protein localises to the cytoplasm. In terms of biological role, this protein promotes the GTP-dependent binding of aminoacyl-tRNA to the A-site of ribosomes during protein biosynthesis. In Schizosaccharomyces pombe (strain 972 / ATCC 24843) (Fission yeast), this protein is Elongation factor 1-alpha-B (tef102).